The sequence spans 478 residues: PRAME family member 27 (478 aa).

The LRR 1 repeat unit spans residues 17 to 40; sequence RSLLRDQALAMSTLEELPTELFPP. Residues 99–126 form an LRR 1; degenerate repeat; that stretch reads RWKLQVLDLQDVCENFWMVWSEAMARGS. The LRR 2; degenerate repeat unit spans residues 181–205; it reads HLCCKKLKILGMPFRNIRSILKMVN. One copy of the LRR 3; degenerate repeat lies at 206-232; sequence LDCIQEVEVNCKWVLPILTQFTPYLGH. Residues 233–268 form an LRR 4; degenerate repeat; that stretch reads MRNLQKLVLSHMDVSRYVSPEQKKEIVTQFTTQFLK. LRR repeat units lie at residues 269-294, 295-326, 327-348, 351-378, and 379-403; these read LHCL…LSCL, KTSL…SQLK, TLDL…ILLE, AATL…ALSR, and CFEL…LLSH.

It belongs to the PRAME family.

The protein is PRAME family member 27 of Homo sapiens (Human).